A 258-amino-acid polypeptide reads, in one-letter code: TLC domain-containing protein 4-A (258 aa).

6 consecutive transmembrane segments (helical) span residues 5 to 25 (LISYCVVTGSFLGFQLLFSAI), 52 to 72 (FVSTNHALIVGSACLYILAYD), 85 to 105 (FWVKMNVAITCGYLVQDLLLL), 116 to 132 (YMVCHHLAVFYSYGYVL), 171 to 191 (PVLLNGLAMALVFFIVRIAVI), and 212 to 232 (IGPQVAWIVSCVVLDILNVFW). A TLC domain is found at 43 to 245 (GKQCEWDSRF…IARGFYKVVK (203 aa)).

It belongs to the TLCD4 family.

The protein localises to the membrane. The chain is TLC domain-containing protein 4-A (tlcd4-a) from Xenopus laevis (African clawed frog).